The primary structure comprises 344 residues: UDP-3-O-acylglucosamine N-acyltransferase (344 aa).

Histidine 248 serves as the catalytic Proton acceptor.

It belongs to the transferase hexapeptide repeat family. LpxD subfamily. In terms of assembly, homotrimer.

It catalyses the reaction a UDP-3-O-[(3R)-3-hydroxyacyl]-alpha-D-glucosamine + a (3R)-hydroxyacyl-[ACP] = a UDP-2-N,3-O-bis[(3R)-3-hydroxyacyl]-alpha-D-glucosamine + holo-[ACP] + H(+). It participates in bacterial outer membrane biogenesis; LPS lipid A biosynthesis. Catalyzes the N-acylation of UDP-3-O-acylglucosamine using 3-hydroxyacyl-ACP as the acyl donor. Is involved in the biosynthesis of lipid A, a phosphorylated glycolipid that anchors the lipopolysaccharide to the outer membrane of the cell. The protein is UDP-3-O-acylglucosamine N-acyltransferase of Synechocystis sp. (strain ATCC 27184 / PCC 6803 / Kazusa).